The primary structure comprises 72 residues: Translation initiation factor IF-1 (72 aa).

Residues 1 to 72 (MTKEEVLEFP…TKGRITYRFK (72 aa)) form the S1-like domain.

Belongs to the IF-1 family. As to quaternary structure, component of the 30S ribosomal translation pre-initiation complex which assembles on the 30S ribosome in the order IF-2 and IF-3, IF-1 and N-formylmethionyl-tRNA(fMet); mRNA recruitment can occur at any time during PIC assembly.

It localises to the cytoplasm. One of the essential components for the initiation of protein synthesis. Stabilizes the binding of IF-2 and IF-3 on the 30S subunit to which N-formylmethionyl-tRNA(fMet) subsequently binds. Helps modulate mRNA selection, yielding the 30S pre-initiation complex (PIC). Upon addition of the 50S ribosomal subunit IF-1, IF-2 and IF-3 are released leaving the mature 70S translation initiation complex. The protein is Translation initiation factor IF-1 of Agrobacterium fabrum (strain C58 / ATCC 33970) (Agrobacterium tumefaciens (strain C58)).